We begin with the raw amino-acid sequence, 833 residues long: Ventricular zone-expressed PH domain-containing protein 1 (833 aa).

Interaction with TGFBR1 stretches follow at residues 201 to 319 (AELL…LANM) and 663 to 833 (ESTF…TTYL). One can recognise a PH domain in the interval 716 to 819 (QPLIEGKLKE…WLQCINVALA (104 aa)).

It belongs to the MELT/VEPH family. In terms of assembly, interacts with TGFBR1. Specifically expressed in kidney and eye. In the eye, expressed in retinal pigmented epithelium but not in the neural retina.

Its subcellular location is the cell membrane. In terms of biological role, interacts with TGF-beta receptor type-1 (TGFBR1) and inhibits dissociation of activated SMAD2 from TGFBR1, impeding its nuclear accumulation and resulting in impaired TGF-beta signaling. May also affect FOXO, Hippo and Wnt signaling. This is Ventricular zone-expressed PH domain-containing protein 1 (Veph1) from Mus musculus (Mouse).